The primary structure comprises 106 residues: MSDLISYDDVIDAAYDIFLEMAPDNLEPADVILFTAQFEDRGAAELVETGDDWVEHVGFDIDKEVYAEVRIGLVNEENDVLDDVFARMLISRDPEHKFCHMLWKRD.

This sequence belongs to the putative dsDNA mimic protein family.

Its function is as follows. May act as a double-stranded DNA (dsDNA) mimic. Probably regulates the activity of a dsDNA-binding protein. This Vibrio campbellii (strain ATCC BAA-1116) protein is Putative double-stranded DNA mimic protein VIBHAR_02752.